We begin with the raw amino-acid sequence, 271 residues long: Formamidopyrimidine-DNA glycosylase (271 aa).

Pro2 (schiff-base intermediate with DNA) is an active-site residue. Residue Glu3 is the Proton donor of the active site. The active-site Proton donor; for beta-elimination activity is the Lys57. Residues His90, Arg109, and Arg151 each coordinate DNA. The FPG-type zinc finger occupies 236–270; the sequence is MVYGRAGEACVTCKTKLQEIRQSNRSSVFCPSCQQ. Arg260 (proton donor; for delta-elimination activity) is an active-site residue.

The protein belongs to the FPG family. Monomer. It depends on Zn(2+) as a cofactor.

It catalyses the reaction Hydrolysis of DNA containing ring-opened 7-methylguanine residues, releasing 2,6-diamino-4-hydroxy-5-(N-methyl)formamidopyrimidine.. The catalysed reaction is 2'-deoxyribonucleotide-(2'-deoxyribose 5'-phosphate)-2'-deoxyribonucleotide-DNA = a 3'-end 2'-deoxyribonucleotide-(2,3-dehydro-2,3-deoxyribose 5'-phosphate)-DNA + a 5'-end 5'-phospho-2'-deoxyribonucleoside-DNA + H(+). Functionally, involved in base excision repair of DNA damaged by oxidation or by mutagenic agents. Acts as a DNA glycosylase that recognizes and removes damaged bases. Has a preference for oxidized purines, such as 7,8-dihydro-8-oxoguanine (8-oxoG). Has AP (apurinic/apyrimidinic) lyase activity and introduces nicks in the DNA strand. Cleaves the DNA backbone by beta-delta elimination to generate a single-strand break at the site of the removed base with both 3'- and 5'-phosphates. This Colwellia psychrerythraea (strain 34H / ATCC BAA-681) (Vibrio psychroerythus) protein is Formamidopyrimidine-DNA glycosylase.